Reading from the N-terminus, the 43-residue chain is Gene 67 protein (43 aa).

The polypeptide is Gene 67 protein (67) (Mycobacterium phage L5 (Mycobacteriophage L5)).